The following is a 451-amino-acid chain: 12S seed storage protein CRD (451 aa).

The first 25 residues, 1 to 25 (MHKLLFSLLSVVSLSFLLFFHGAEA), serve as a signal peptide directing secretion. 2 cysteine pairs are disulfide-bonded: cysteine 36/cysteine 69 and cysteine 112/cysteine 277. Serine 39 is modified (phosphoserine). 2 consecutive Cupin type-1 domains span residues 42–234 (NSLA…ETAK) and 283–432 (ENID…EEAK). Threonine 115 is subject to Phosphothreonine. Serine 302 is subject to Phosphoserine. Threonine 396 is modified (phosphothreonine). A Phosphoserine modification is found at serine 437.

It belongs to the 11S seed storage protein (globulins) family. In terms of assembly, hexamer; each subunit is composed of an acidic and a basic chain derived from a single precursor and linked by a disulfide bond. Post-translationally, ubiquitinated. Proteolytically processed during seed maturation at a conserved Asn-Gly peptide bond by an asparaginyl endopeptidase to produce two mature polypeptides referred to as alpha and beta subunits that are joined together by a disulfide bond. In terms of processing, phosphorylated in seeds on some Tyr residues in response to abscisic acid (ABA). Accumulates in seeds 8 days after anthesis.

It localises to the protein storage vacuole. Seed storage protein. This chain is 12S seed storage protein CRD (CRD), found in Arabidopsis thaliana (Mouse-ear cress).